A 278-amino-acid polypeptide reads, in one-letter code: MLDLVVIGHVSIDTLIFPDGRRVTMPGGAAAGVATSAALAGAKVGLVTKIGTDFPKEWLQALSSVLDISGVQILPGKTIHIQMIYHEDGSVDAPVEMGVAQKMGEIPIPEEYLDAKVFHISPIPPEEQLKLLNRLKGKRVTVDFNPTYKEEYIKRRDLLREIVSRVEIVFPNEREALMITGAEDVKDAARILHGWGAKLVVITRGEKGVLVYDGSFREFPALPIKPEEIVDPTGGGDAFAGGFLAGYSRGRPLEECVRLGLERAREVLKKWGDWSITV.

ATP is bound at residue 203–208 (TRGEKG). The Proton acceptor role is filled by Asp-237.

Belongs to the carbohydrate kinase PfkB family. Requires Mg(2+) as cofactor.

The catalysed reaction is cytidine + ATP = CMP + ADP + H(+). In terms of biological role, involved in nucleoside degradation. Phosphorylates cytidine to CMP. Can also act on deoxycytidine and uridine, but is most active with cytidine. ATP is the most preferred phosphate donor, but it can also use GTP, CTP or UTP. The chain is Cytidine kinase from Thermococcus kodakarensis (strain ATCC BAA-918 / JCM 12380 / KOD1) (Pyrococcus kodakaraensis (strain KOD1)).